We begin with the raw amino-acid sequence, 244 residues long: MMNLLSSDGVQVLPRPFTLNERRREVRSFVLRQGHFTPAQKRAFDHYWPRFGVDFIGQLRDLDVLFGRSAPKVLEVGFGNGAALRFAAQHEPRYDYIGIEVYAPGVGRLLNGLAEDGSRHVRLYHYDAVEVLNKEIADGALDEIRIYFPDPWHKKRHHKRRLIQPLFATLLVRKLRVGGCLHMATDWADYAEQMWDVLDATPGLVNRAGLRGQVPCPDWRVQTRFERRGQNLGHRVWNLLYDRV.

Residues glutamate 75, glutamate 100, aspartate 127, and aspartate 150 each contribute to the S-adenosyl-L-methionine site. Aspartate 150 is a catalytic residue. Substrate is bound by residues lysine 154, aspartate 186, and 223–226 (TRFE).

Belongs to the class I-like SAM-binding methyltransferase superfamily. TrmB family.

The enzyme catalyses guanosine(46) in tRNA + S-adenosyl-L-methionine = N(7)-methylguanosine(46) in tRNA + S-adenosyl-L-homocysteine. Its pathway is tRNA modification; N(7)-methylguanine-tRNA biosynthesis. Functionally, catalyzes the formation of N(7)-methylguanine at position 46 (m7G46) in tRNA. The polypeptide is tRNA (guanine-N(7)-)-methyltransferase (Xylella fastidiosa (strain M12)).